Consider the following 622-residue polypeptide: Chaperone protein HscA homolog (622 aa).

The protein belongs to the heat shock protein 70 family.

In terms of biological role, chaperone involved in the maturation of iron-sulfur cluster-containing proteins. Has a low intrinsic ATPase activity which is markedly stimulated by HscB. The sequence is that of Chaperone protein HscA homolog from Acidovorax ebreus (strain TPSY) (Diaphorobacter sp. (strain TPSY)).